Reading from the N-terminus, the 263-residue chain is Interleukin-22 receptor subunit alpha-2 (263 aa).

An N-terminal signal peptide occupies residues 1–21 (MMPKHCFLGFLISFFLTGVAG). 3 consecutive Fibronectin type-III domains span residues 26 to 68 (HESL…KIMF), 100 to 161 (GQRQ…TKID), and 162 to 263 (PPVM…VEIP). The N-linked (GlcNAc...) asparagine glycan is linked to N56. Cysteines 110 and 118 form a disulfide. Residues N166, N171, N192, and N209 are each glycosylated (N-linked (GlcNAc...) asparagine). A disulfide bridge links C238 with C259.

Belongs to the type II cytokine receptor family. In terms of tissue distribution, expressed in placenta, spleen, breast, skin and lung. Also detected in intestinal tract, testis, brain, heart and thymus. No expression found in prostate, bladder, kidney, ovary, muscle, bone marrow, liver and uterus. Isoform 1 is expressed only in placenta. Isoform 2 is expressed in placenta and breast and at lower level in spleen, skin, thymus and stomach.

Its subcellular location is the secreted. In terms of biological role, isoform 2 is a receptor for IL22. Binds to IL22, prevents interaction with the functional IL-22R complex and blocks the activity of IL22 (in vitro). May play an important role as an IL22 antagonist in the regulation of inflammatory responses. Its function is as follows. Isoform 1 may play a role in establishing and maintaining successful pregnancy. The sequence is that of Interleukin-22 receptor subunit alpha-2 (IL22RA2) from Homo sapiens (Human).